Here is a 388-residue protein sequence, read N- to C-terminus: Acetate kinase (388 aa).

Asn-14 serves as a coordination point for Mg(2+). Lys-21 provides a ligand contact to ATP. Arg-80 provides a ligand contact to substrate. The Proton donor/acceptor role is filled by Asp-137. ATP contacts are provided by residues 197 to 201 (HLGNG), 271 to 273 (DFR), and 319 to 323 (GIGEH). Mg(2+) is bound at residue Glu-373.

The protein belongs to the acetokinase family. In terms of assembly, homodimer. Mg(2+) serves as cofactor. Mn(2+) is required as a cofactor.

The protein resides in the cytoplasm. The catalysed reaction is acetate + ATP = acetyl phosphate + ADP. It functions in the pathway metabolic intermediate biosynthesis; acetyl-CoA biosynthesis; acetyl-CoA from acetate: step 1/2. In terms of biological role, catalyzes the formation of acetyl phosphate from acetate and ATP. Can also catalyze the reverse reaction. In Mycobacterium marinum (strain ATCC BAA-535 / M), this protein is Acetate kinase.